The primary structure comprises 384 residues: Urea transporter 1 (384 aa).

The disordered stretch occupies residues 1 to 23; it reads MDDNPTAVKLDQGGNQAPQGQGR. 5 consecutive transmembrane segments (helical) span residues 61–81, 85–105, 111–131, 138–158, and 169–189; these read ISQVVFVSNPISGILILVGLL, PWCALNGCVGTVVSTLTALLL, AITAGLQGYNATLVGILMAIY, FWWLLFPVSAMSMTCPIFSSA, and PVFTLPFNMALSMYLSATGHF. The N-linked (GlcNAc...) asparagine glycan is linked to N206. 3 consecutive transmembrane segments (helical) span residues 237-257, 279-299, and 327-347; these read GGIFLGAILLSSPLMCLHAAI, GLWGFNSSLACIAIGGMFMAL, and VVGLPSCTWPFCLATLLFLLL.

The protein belongs to the urea transporter family. As to quaternary structure, homotrimer; each subunit contains a pore through which urea permeates. Identified in a complex with STOM.

The protein resides in the cell membrane. It is found in the basolateral cell membrane. It catalyses the reaction urea(in) = urea(out). Functionally, mediates the transport of urea driven by a concentration gradient across the cell membranes of erythrocytes and the renal inner medullary collecting duct which is critical to the urinary concentrating mechanism. Facilitates water transport in erythrocytes. The chain is Urea transporter 1 (SLC14A1) from Ovis aries (Sheep).